Reading from the N-terminus, the 872-residue chain is Alanine--tRNA ligase (872 aa).

Residues His-563, His-567, Cys-665, and His-669 each contribute to the Zn(2+) site.

It belongs to the class-II aminoacyl-tRNA synthetase family. It depends on Zn(2+) as a cofactor.

The protein localises to the cytoplasm. It catalyses the reaction tRNA(Ala) + L-alanine + ATP = L-alanyl-tRNA(Ala) + AMP + diphosphate. In terms of biological role, catalyzes the attachment of alanine to tRNA(Ala) in a two-step reaction: alanine is first activated by ATP to form Ala-AMP and then transferred to the acceptor end of tRNA(Ala). Also edits incorrectly charged Ser-tRNA(Ala) and Gly-tRNA(Ala) via its editing domain. This is Alanine--tRNA ligase from Bacteroides fragilis (strain YCH46).